The chain runs to 394 residues: Phosphatidylinositol 4-phosphate 5-kinase-like protein 1 (394 aa).

Residues aspartate 36–threonine 393 enclose the PIPK domain.

In terms of assembly, heterodimerizes with other type I phosphatidylinositol 4-phosphate 5-kinase.

The protein localises to the cytoplasm. Its subcellular location is the membrane. The catalysed reaction is a 1,2-diacyl-sn-glycero-3-phospho-(1D-myo-inositol 4-phosphate) + ATP = a 1,2-diacyl-sn-glycero-3-phospho-(1D-myo-inositol-4,5-bisphosphate) + ADP + H(+). Functionally, may act as a scaffold to localize and regulate type I PI(4)P 5-kinases to specific compartments within the cell, where they generate PI(4,5)P2 for actin nucleation, signaling and scaffold protein recruitment and conversion to PI(3,4,5)P3. This is Phosphatidylinositol 4-phosphate 5-kinase-like protein 1 (PIP5KL1) from Homo sapiens (Human).